Consider the following 65-residue polypeptide: Large ribosomal subunit protein uL29c (65 aa).

This sequence belongs to the universal ribosomal protein uL29 family.

The protein resides in the plastid. It is found in the chloroplast. The chain is Large ribosomal subunit protein uL29c (rpl29) from Guillardia theta (Cryptophyte).